Consider the following 236-residue polypeptide: Aspartate/glutamate leucyltransferase (236 aa).

Belongs to the R-transferase family. Bpt subfamily.

The protein resides in the cytoplasm. It carries out the reaction N-terminal L-glutamyl-[protein] + L-leucyl-tRNA(Leu) = N-terminal L-leucyl-L-glutamyl-[protein] + tRNA(Leu) + H(+). The enzyme catalyses N-terminal L-aspartyl-[protein] + L-leucyl-tRNA(Leu) = N-terminal L-leucyl-L-aspartyl-[protein] + tRNA(Leu) + H(+). Functions in the N-end rule pathway of protein degradation where it conjugates Leu from its aminoacyl-tRNA to the N-termini of proteins containing an N-terminal aspartate or glutamate. The protein is Aspartate/glutamate leucyltransferase of Saccharophagus degradans (strain 2-40 / ATCC 43961 / DSM 17024).